Consider the following 227-residue polypeptide: DNA utilization protein YhgH (227 aa).

It belongs to the ComF/GntX family.

Functionally, required for the use of extracellular DNA as a nutrient. Has been suggested to be involved in gluconate metabolism. This Escherichia coli (strain K12) protein is DNA utilization protein YhgH.